The following is a 186-amino-acid chain: Ribulose bisphosphate carboxylase small subunit, chloroplastic 6 (186 aa).

A chloroplast-targeting transit peptide spans 1 to 60 (MASSMLSNAAVATTAASRSAGAQASMVAPFTGLKSVSAFPVTRKSSNDLSTVPSNGGKVQ).

It belongs to the RuBisCO small chain family. In terms of assembly, heterohexadecamer of 8 large and 8 small subunits.

The protein localises to the plastid. The protein resides in the chloroplast. In terms of biological role, ruBisCO catalyzes two reactions: the carboxylation of D-ribulose 1,5-bisphosphate, the primary event in carbon dioxide fixation, as well as the oxidative fragmentation of the pentose substrate. Both reactions occur simultaneously and in competition at the same active site. Although the small subunit is not catalytic it is essential for maximal activity. This is Ribulose bisphosphate carboxylase small subunit, chloroplastic 6 from Mesembryanthemum crystallinum (Common ice plant).